We begin with the raw amino-acid sequence, 381 residues long: 3-isopropylmalate dehydrogenase (381 aa).

The substrate site is built by R104, R114, R142, and D232. Positions 232, 256, and 260 each coordinate Mg(2+). 290–302 (GSAPDIAGQDKAN) provides a ligand contact to NAD(+).

The protein belongs to the isocitrate and isopropylmalate dehydrogenases family. LeuB type 1 subfamily. Homodimer. Mg(2+) serves as cofactor. The cofactor is Mn(2+).

It localises to the cytoplasm. It catalyses the reaction (2R,3S)-3-isopropylmalate + NAD(+) = 4-methyl-2-oxopentanoate + CO2 + NADH. It participates in amino-acid biosynthesis; L-leucine biosynthesis; L-leucine from 3-methyl-2-oxobutanoate: step 3/4. Functionally, catalyzes the oxidation of 3-carboxy-2-hydroxy-4-methylpentanoate (3-isopropylmalate) to 3-carboxy-4-methyl-2-oxopentanoate. The product decarboxylates to 4-methyl-2 oxopentanoate. The chain is 3-isopropylmalate dehydrogenase from Synechococcus sp. (strain JA-3-3Ab) (Cyanobacteria bacterium Yellowstone A-Prime).